The primary structure comprises 498 residues: Protein translocase subunit SecY (498 aa).

The next 10 membrane-spanning stretches (helical) occupy residues 23–43 (FVIS…ISVI), 65–87 (FDLF…VGIS), 124–144 (ITRF…IALI), 163–183 (AFYI…GDII), 191–211 (GITL…FIVM), 229–249 (AINF…ISFV), 281–301 (AAGV…ITIA), 322–342 (PVGI…YSYI), 382–402 (FIGA…SLVL), and 406–426 (TTLS…MELY). A compositionally biased stretch (basic and acidic residues) spans 478–488 (VEPTQDKKKNP). The disordered stretch occupies residues 478–498 (VEPTQDKKKNPSDPLEVSQLW).

The protein belongs to the SecY/SEC61-alpha family. In terms of assembly, component of the Sec protein translocase complex. Heterotrimer consisting of SecY, SecE and SecG subunits. The heterotrimers can form oligomers, although 1 heterotrimer is thought to be able to translocate proteins. Interacts with the ribosome. Interacts with SecDF, and other proteins may be involved. Interacts with SecA.

Its subcellular location is the cell membrane. Its function is as follows. The central subunit of the protein translocation channel SecYEG. Consists of two halves formed by TMs 1-5 and 6-10. These two domains form a lateral gate at the front which open onto the bilayer between TMs 2 and 7, and are clamped together by SecE at the back. The channel is closed by both a pore ring composed of hydrophobic SecY resides and a short helix (helix 2A) on the extracellular side of the membrane which forms a plug. The plug probably moves laterally to allow the channel to open. The ring and the pore may move independently. The chain is Protein translocase subunit SecY from Mycoplasmoides gallisepticum (strain R(low / passage 15 / clone 2)) (Mycoplasma gallisepticum).